The sequence spans 983 residues: GPI ethanolamine phosphate transferase 2, catalytic subunit (983 aa).

The Lumenal portion of the chain corresponds to 1 to 431 (MRLGSGTFAT…SLSAQVAQYD (431 aa)). A glycan (N-linked (GlcNAc...) asparagine) is linked at N194. Transmembrane regions (helical) follow at residues 432–452 (IYSM…LLLS), 471–491 (GFSL…VIVC), 506–526 (LAAG…VSVL), 552–572 (LLIL…SFVE), 699–719 (VLAA…CSPV), 721–741 (KAAL…IGSV), 752–772 (ISKG…ILFT), 789–809 (LKTV…ALLF), 812–832 (HNLP…KFIW), 879–899 (VEIP…VLWA), 919–939 (ACFC…VLVT), and 955–975 (LLYE…FTAM).

The protein belongs to the PIGG/PIGN/PIGO family. PIGG subfamily. In terms of assembly, part of the ethanolamine phosphate transferase 2 complex composed by PIGG and PIGF. PIGF is required to stabilize it. Competes with PIGO for the binding of PIGF.

The protein localises to the endoplasmic reticulum membrane. It participates in glycolipid biosynthesis; glycosylphosphatidylinositol-anchor biosynthesis. Catalytic subunit of the ethanolamine phosphate transferase 2 complex that transfers an ethanolamine phosphate (EtNP) from a phosphatidylethanolamine (PE) to the 6-OH position of the second alpha-1,6-linked mannose of a 6-PEtn-alpha-D-Man-(1-&gt;2)-alpha-D-Man-(1-&gt;6)-2-PEtn-alpha-D-Man-(1-&gt;4)-alpha-D-GlcN-(1-&gt;6)-(1-radyl,2-acyl-sn-glycero-3-phospho)-2-acyl-inositol (also termed H7) intermediate to generate a 6-PEtn-alpha-D-Man-(1-&gt;2)-6-PEtn-alpha-D-Man-(1-&gt;6)-2-PEtn-alpha-D-Man-(1-&gt;4)-alpha-D-GlcN-(1-&gt;6)-(1-radyl,2-acyl-sn-glycero-3-phospho)-2-acyl-inositol (also termed H8) and participates in the eleventh step of the glycosylphosphatidylinositol-anchor biosynthesis. The sequence is that of GPI ethanolamine phosphate transferase 2, catalytic subunit from Homo sapiens (Human).